The following is a 603-amino-acid chain: UvrABC system protein C (603 aa).

In terms of domain architecture, GIY-YIG spans 14-92 (ELPGVYRMLD…IKSLAPRYNI (79 aa)). In terms of domain architecture, UVR spans 201 to 236 (QEVTRRLTKSMEEASAKLAFEQAAVFRDQIQSLHQV).

The protein belongs to the UvrC family. Interacts with UvrB in an incision complex.

The protein localises to the cytoplasm. The UvrABC repair system catalyzes the recognition and processing of DNA lesions. UvrC both incises the 5' and 3' sides of the lesion. The N-terminal half is responsible for the 3' incision and the C-terminal half is responsible for the 5' incision. The sequence is that of UvrABC system protein C from Dechloromonas aromatica (strain RCB).